We begin with the raw amino-acid sequence, 207 residues long: Small ribosomal subunit protein uS4 (207 aa).

Positions 96 to 159 (RRLDNVVYRL…RASTFIADNI (64 aa)) constitute an S4 RNA-binding domain.

Belongs to the universal ribosomal protein uS4 family. Part of the 30S ribosomal subunit. Contacts protein S5. The interaction surface between S4 and S5 is involved in control of translational fidelity.

Its function is as follows. One of the primary rRNA binding proteins, it binds directly to 16S rRNA where it nucleates assembly of the body of the 30S subunit. With S5 and S12 plays an important role in translational accuracy. The chain is Small ribosomal subunit protein uS4 from Leptospira borgpetersenii serovar Hardjo-bovis (strain JB197).